A 385-amino-acid chain; its full sequence is Muconate cycloisomerase 1-2 (385 aa).

Residue Lys-171 is part of the active site. Mn(2+)-binding residues include Glu-226 and Asp-251.

This sequence belongs to the mandelate racemase/muconate lactonizing enzyme family. As to quaternary structure, homooctamer. The cofactor is Mn(2+).

The catalysed reaction is (S)-muconolactone = cis,cis-muconate + H(+). It functions in the pathway aromatic compound metabolism; beta-ketoadipate pathway; 5-oxo-4,5-dihydro-2-furylacetate from catechol: step 2/3. In terms of biological role, catalyzes a syn cycloisomerization. This Acinetobacter lwoffii protein is Muconate cycloisomerase 1-2 (catB2).